The sequence spans 359 residues: Phosphatidylglycerol--prolipoprotein diacylglyceryl transferase (359 aa).

4 helical membrane passes run 24 to 44, 58 to 78, 98 to 118, and 124 to 144; these read VALR…IVWG, VLDI…LYHV, VWQG…GAWI, and GIPL…AQAI. Arg-146 is a binding site for a 1,2-diacyl-sn-glycero-3-phospho-(1'-sn-glycerol). 3 consecutive transmembrane segments (helical) span residues 193-213, 222-243, and 258-278; these read FVVH…VLLL, IGHG…FWIE, and VNSF…FAAT. The interval 284–359 is disordered; it reads PAELRPADGG…IDSKKDDAND (76 aa). Positions 306-323 are enriched in basic and acidic residues; the sequence is IAQKEPEKNVEDAGKDEG. Residues 336–349 are compositionally biased toward low complexity; the sequence is ASTASTGGEAGTKT. The segment covering 350 to 359 has biased composition (basic and acidic residues); it reads IDSKKDDAND.

The protein belongs to the Lgt family.

It localises to the cell membrane. The catalysed reaction is L-cysteinyl-[prolipoprotein] + a 1,2-diacyl-sn-glycero-3-phospho-(1'-sn-glycerol) = an S-1,2-diacyl-sn-glyceryl-L-cysteinyl-[prolipoprotein] + sn-glycerol 1-phosphate + H(+). It participates in protein modification; lipoprotein biosynthesis (diacylglyceryl transfer). In terms of biological role, catalyzes the transfer of the diacylglyceryl group from phosphatidylglycerol to the sulfhydryl group of the N-terminal cysteine of a prolipoprotein, the first step in the formation of mature lipoproteins. In Rhodococcus jostii (strain RHA1), this protein is Phosphatidylglycerol--prolipoprotein diacylglyceryl transferase.